A 100-amino-acid polypeptide reads, in one-letter code: Integration host factor subunit alpha (100 aa).

This sequence belongs to the bacterial histone-like protein family. In terms of assembly, heterodimer of an alpha and a beta chain.

Functionally, this protein is one of the two subunits of integration host factor, a specific DNA-binding protein that functions in genetic recombination as well as in transcriptional and translational control. This is Integration host factor subunit alpha from Ruegeria sp. (strain TM1040) (Silicibacter sp.).